We begin with the raw amino-acid sequence, 557 residues long: Aerobic glycerol-3-phosphate dehydrogenase (557 aa).

21-49 (DVVIVGGGITGAGIALDASNRGMKVALVE) is an FAD binding site.

Belongs to the FAD-dependent glycerol-3-phosphate dehydrogenase family. Requires FAD as cofactor.

The protein resides in the cytoplasm. It carries out the reaction a quinone + sn-glycerol 3-phosphate = dihydroxyacetone phosphate + a quinol. Its pathway is polyol metabolism; glycerol degradation via glycerol kinase pathway; glycerone phosphate from sn-glycerol 3-phosphate (aerobic route): step 1/1. This Staphylococcus epidermidis (strain ATCC 35984 / DSM 28319 / BCRC 17069 / CCUG 31568 / BM 3577 / RP62A) protein is Aerobic glycerol-3-phosphate dehydrogenase (glpD).